The following is a 499-amino-acid chain: Probable cytosol aminopeptidase (499 aa).

Mn(2+) contacts are provided by K263 and D268. K275 is a catalytic residue. The Mn(2+) site is built by D286, D345, and E347. Residue R349 is part of the active site.

The protein belongs to the peptidase M17 family. It depends on Mn(2+) as a cofactor.

Its subcellular location is the cytoplasm. The enzyme catalyses Release of an N-terminal amino acid, Xaa-|-Yaa-, in which Xaa is preferably Leu, but may be other amino acids including Pro although not Arg or Lys, and Yaa may be Pro. Amino acid amides and methyl esters are also readily hydrolyzed, but rates on arylamides are exceedingly low.. The catalysed reaction is Release of an N-terminal amino acid, preferentially leucine, but not glutamic or aspartic acids.. Its function is as follows. Presumably involved in the processing and regular turnover of intracellular proteins. Catalyzes the removal of unsubstituted N-terminal amino acids from various peptides. This chain is Probable cytosol aminopeptidase, found in Bradyrhizobium sp. (strain BTAi1 / ATCC BAA-1182).